The sequence spans 223 residues: Small ribosomal subunit protein uS3 (223 aa).

The region spanning 39–117 (IREHLRKKPS…RPELNAKLVA (79 aa)) is the KH type-2 domain.

This sequence belongs to the universal ribosomal protein uS3 family. In terms of assembly, part of the 30S ribosomal subunit. Forms a tight complex with proteins S10 and S14.

Functionally, binds the lower part of the 30S subunit head. Binds mRNA in the 70S ribosome, positioning it for translation. This is Small ribosomal subunit protein uS3 from Chlamydia caviae (strain ATCC VR-813 / DSM 19441 / 03DC25 / GPIC) (Chlamydophila caviae).